The primary structure comprises 190 residues: Secretory phospholipase A2 (190 aa).

The signal sequence occupies residues 1–15 (MKLAYFSSLLPLALA). Residues C62 and C78 are joined by a disulfide bond. A Ca(2+)-binding site is contributed by A65. Residue H81 is part of the active site. A Ca(2+)-binding site is contributed by D82.

The protein belongs to the phospholipase A2 family. Requires Ca(2+) as cofactor.

It localises to the lipid droplet. The protein localises to the secreted. The catalysed reaction is a 1,2-diacyl-sn-glycero-3-phosphocholine + H2O = a 1-acyl-sn-glycero-3-phosphocholine + a fatty acid + H(+). In terms of biological role, secretory phospholipase that catalyzes the calcium-dependent hydrolysis of the 2-acyl groups in 3-sn-phosphoglycerides. Increases the ability to utilize insect-derived nutrients and lipids, and promotes lipid dropplets accumulation. Plays a role in virulence, including more efficient penetration of the insect cuticle and evasion of host immune response by repressing the expression of host immunity genes. This is Secretory phospholipase A2 from Beauveria bassiana (strain ARSEF 2860) (White muscardine disease fungus).